A 545-amino-acid polypeptide reads, in one-letter code: Glucose-6-phosphate isomerase (545 aa).

Glutamate 351 serves as the catalytic Proton donor. Active-site residues include histidine 382 and lysine 510.

It belongs to the GPI family.

The protein localises to the cytoplasm. It catalyses the reaction alpha-D-glucose 6-phosphate = beta-D-fructose 6-phosphate. Its pathway is carbohydrate biosynthesis; gluconeogenesis. It participates in carbohydrate degradation; glycolysis; D-glyceraldehyde 3-phosphate and glycerone phosphate from D-glucose: step 2/4. Catalyzes the reversible isomerization of glucose-6-phosphate to fructose-6-phosphate. This chain is Glucose-6-phosphate isomerase, found in Shewanella halifaxensis (strain HAW-EB4).